The sequence spans 517 residues: Splicing factor U2AF 59 kDa subunit (517 aa).

The segment covering 1 to 13 (MDLSSRLSSGSSR) has biased composition (low complexity). The tract at residues 1-112 (MDLSSRLSSG…PSRERSVRSI (112 aa)) is disordered. Basic and acidic residues predominate over residues 20 to 89 (DYRDEEPRRE…RRYDDYEPRS (70 aa)). 2 RRM domains span residues 310 to 388 (DKIY…FACV) and 418 to 509 (RVLQ…FYGE).

It belongs to the splicing factor SR family. In terms of assembly, forms a heterodimer with the U2AF small subunit. Can also form a homodimer. U2AF large subunit (U2AF59), U2AF small subunit (U2AF23) and SF1 (bpb1) interact to form a complex required for complex A formation. Interacts with wat1/pop3.

It localises to the nucleus. Functionally, necessary for the splicing of pre-mRNA. The SF1-U2AF59-U2AF23 complex has a role in the recognition of the branch site (5'-UACUAAC-3'), the pyrimidine tract and the 3'-splice site at the 3'-end of introns. The protein is Splicing factor U2AF 59 kDa subunit (prp2) of Schizosaccharomyces pombe (strain 972 / ATCC 24843) (Fission yeast).